Consider the following 316-residue polypeptide: tRNA dimethylallyltransferase (316 aa).

13–20 (GPTASGKT) is a binding site for ATP. 15 to 20 (TASGKT) contacts substrate. Interaction with substrate tRNA stretches follow at residues 38 to 41 (DSAL), 162 to 166 (QRINR), 243 to 248 (RCVGYR), and 276 to 283 (KRQITWLR).

It belongs to the IPP transferase family. Monomer. Mg(2+) serves as cofactor.

The enzyme catalyses adenosine(37) in tRNA + dimethylallyl diphosphate = N(6)-dimethylallyladenosine(37) in tRNA + diphosphate. Functionally, catalyzes the transfer of a dimethylallyl group onto the adenine at position 37 in tRNAs that read codons beginning with uridine, leading to the formation of N6-(dimethylallyl)adenosine (i(6)A). The polypeptide is tRNA dimethylallyltransferase (Pasteurella multocida (strain Pm70)).